A 397-amino-acid chain; its full sequence is MAKASFERTKPHVNIGTIGHVDHGKTTLTAAITKVLADQYPDLNEARAFDQVDNAPEEKERGITINVSHVEYQTEKRHYAHVDAPGHADYVKNMITGAAQMDGAILVVAATDGPMPQTREHVLLARQVGVPYIVVALNKSDMVDDEELLELVEFEVRDLLSSQDFDGDNAPVIPVSALKALEGDEKWVKSVQDLMAAVDDNVPEPERDVDKPFLMPVEDVFTITGRGTVVTGRVERGVLLPNDEIEIVGIKEKSSKTTVTAIEMFRKTLPDARAGENVGLLLRGTKREDVERGQVIVKPGSITPHTKFEAQVYILSKDEGGRHNPFYSNYRPQFYFRTTDVTGVITLPEGTEMVMPGDNTDMSVELIQPIAMEDRLRFAIREGGRTVGAGRVTKITA.

A tr-type G domain is found at 10–206 (KPHVNIGTIG…AVDDNVPEPE (197 aa)). A G1 region spans residues 19–26 (GHVDHGKT). 19–26 (GHVDHGKT) is a GTP binding site. A Mg(2+)-binding site is contributed by T26. The interval 62 to 66 (GITIN) is G2. Residues 83 to 86 (DAPG) form a G3 region. Residues 83–87 (DAPGH) and 138–141 (NKSD) contribute to the GTP site. A G4 region spans residues 138-141 (NKSD). The G5 stretch occupies residues 176–178 (SAL).

It belongs to the TRAFAC class translation factor GTPase superfamily. Classic translation factor GTPase family. EF-Tu/EF-1A subfamily. As to quaternary structure, monomer.

The protein localises to the cytoplasm. It catalyses the reaction GTP + H2O = GDP + phosphate + H(+). GTP hydrolase that promotes the GTP-dependent binding of aminoacyl-tRNA to the A-site of ribosomes during protein biosynthesis. This is Elongation factor Tu from Brevibacterium linens.